The sequence spans 446 residues: Histidine--tRNA ligase (446 aa).

It belongs to the class-II aminoacyl-tRNA synthetase family. In terms of assembly, homodimer.

The protein localises to the cytoplasm. The enzyme catalyses tRNA(His) + L-histidine + ATP = L-histidyl-tRNA(His) + AMP + diphosphate + H(+). The protein is Histidine--tRNA ligase of Burkholderia pseudomallei (strain 1710b).